We begin with the raw amino-acid sequence, 813 residues long: Xaa-Pro dipeptidyl-peptidase (813 aa).

Active-site charge relay system residues include S375, D495, and H526.

Belongs to the peptidase S15 family. Homodimer.

The protein localises to the cytoplasm. The catalysed reaction is Hydrolyzes Xaa-Pro-|- bonds to release unblocked, N-terminal dipeptides from substrates including Ala-Pro-|-p-nitroanilide and (sequentially) Tyr-Pro-|-Phe-Pro-|-Gly-Pro-|-Ile.. Functionally, removes N-terminal dipeptides sequentially from polypeptides having unsubstituted N-termini provided that the penultimate residue is proline. In Lactiplantibacillus plantarum (strain ATCC BAA-793 / NCIMB 8826 / WCFS1) (Lactobacillus plantarum), this protein is Xaa-Pro dipeptidyl-peptidase.